The sequence spans 182 residues: Methyl-CpG-binding domain-containing protein 5 (182 aa).

Disordered stretches follow at residues 1 to 56 and 80 to 126; these read MSNG…GTVD and HGTP…KPLN. The 77-residue stretch at 25–101 folds into the MBD domain; the sequence is KRATPGDDNW…ENGDSHSEHS (77 aa). A compositionally biased stretch (basic and acidic residues) spans 92 to 105; that stretch reads ENGDSHSEHSEGRG. Residues 106–115 show a composition bias toward basic residues; the sequence is SARRQTKSNK.

As to quaternary structure, homodimer and heterodimer with MBD6. Interacts with DDM1 via its MBD domain. As to expression, mostly expressed in flowers, and, to a lower extent, in seedlings, buds, stems and mature seeds, but barely in roots, exclusively in root meristem cells at tips (at protein level).

Its subcellular location is the nucleus. The protein resides in the chromosome. Functionally, transcriptional regulator that binds CpG islands in promoters where the DNA is methylated at position 5 of cytosine within CpG dinucleotides. In addition, binds specifically methylated m(5)CpNpN but not m(5)CpNpG (N is A, T or C). Plays probably a role in gene silencing. The sequence is that of Methyl-CpG-binding domain-containing protein 5 (MBD5) from Arabidopsis thaliana (Mouse-ear cress).